Reading from the N-terminus, the 647-residue chain is Leucine-rich repeat transmembrane protein FLRT3 (647 aa).

Residues 1–28 form the signal peptide; that stretch reads MITVPWSVFLIWTKIGLLLDMAPYSVAA. At 29-526 the chain is on the extracellular side; it reads KPCPSVCRCD…KEPYKNSSVP (498 aa). The 33-residue stretch at 30-62 folds into the LRRNT domain; the sequence is PCPSVCRCDVGFIYCNDRDLTSIPTGIPEDATN. 2 disulfides stabilise this stretch: Cys31–Cys37 and Cys35–Cys44. LRR repeat units lie at residues 58-82, 83-105, 107-126, 127-152, 154-179, 181-197, 198-223, 225-246, 247-269, and 270-293; these read EDAT…LKNL, RRVE…LPKY, KELH…SLSQ, IPYL…AFRD, IYLR…TIEE, RLDD…SLQD, LTNL…VFMN, VNLT…NLPG, TNLR…AFSY, and LRQL…VFDD. Asn226 carries N-linked (GlcNAc...) asparagine glycosylation. Positions 305 to 356 constitute an LRRCT domain; the sequence is NPWHCGCKMKWVRDWLQSLPLKVNVRGLMCQAPEKVRGMAIKDLNAELFDCK. Cys309 and Cys334 form a disulfide bridge. In terms of domain architecture, Fibronectin type-III spans 404–502; the sequence is PVRKIITIFV…ECIETETAPL (99 aa). A helical membrane pass occupies residues 527 to 547; that stretch reads LAAIIGGAVALVALALLALVC. At 548 to 647 the chain is on the cytoplasmic side; it reads WYVHRNGALF…GIPDSDHSHS (100 aa). A disordered region spans residues 620-647; that stretch reads LYKNSHSESSSNRSYRDSGIPDSDHSHS.

In terms of processing, N-glycosylated. Proteolytic cleavage in the juxtamembrane region gives rise to a soluble ectodomain. Cleavage is probably effected by a metalloprotease.

Its subcellular location is the cell membrane. It is found in the endoplasmic reticulum membrane. The protein localises to the cell junction. The protein resides in the focal adhesion. It localises to the secreted. Its subcellular location is the cell projection. It is found in the axon. The protein localises to the growth cone membrane. Functionally, modulates the structure and function of the apical ectodermal ridge (AER) that controls embryonic limb development. Functions in cell-cell adhesion, cell migration and axon guidance, exerting an attractive or repulsive role depending on its interaction partners. Plays a role in the spatial organization of brain neurons. Plays a role in vascular development. Plays a role in cell-cell adhesion via its interaction with latrophilins that are expressed at the surface of adjacent cells. Mediates axon attraction towards cells expressing NTN1. Mediates axon growth cone collapse and plays a repulsive role in neuron guidance via its interaction with UNC-5 family members. Plays a role in the regulation of the density of glutamaergic synapses. Plays a role in fibroblast growth factor-mediated signaling cascades. Required for normal morphogenesis during embryonic development, but not for normal embryonic patterning. This Gallus gallus (Chicken) protein is Leucine-rich repeat transmembrane protein FLRT3 (FLRT3).